The sequence spans 1479 residues: ESX secretion system protein EccC (1479 aa).

The Cytoplasmic portion of the chain corresponds to 1-235 (MSQLWVLYET…SQEGDGDPRG (235 aa)). Residues 236–256 (LWLMVLPPVMMLLVIGAVALI) form a helical membrane-spanning segment. At 257-259 (QPR) the chain is on the extracellular side. A helical membrane pass occupies residues 260–280 (GVFIMISIAMFATTIVTSTAQ). The Cytoplasmic segment spans residues 281-1479 (YMREKKARQM…DQKIQIPKVE (1199 aa)). The stretch at 291 to 321 (RKEKRRRIYTNYLEQKREELQALSEKQRNVL) forms a coiled coil. FtsK domains follow at residues 652–848 (NDVV…NDSK) and 984–1168 (QSDY…SEKF). 672-679 (GTTGSGKS) is an ATP binding site. Residue E785 is part of the active site. ATP is bound by residues 1004 to 1009 (GYGKST), N1036, D1105, I1197, D1206, 1287 to 1291 (RKGKT), and I1475. The 178-residue stretch at 1267 to 1444 (VRPVAINMRT…ILVTKKSEQS (178 aa)) folds into the FtsK 3 domain.

In terms of assembly, whole protein oligomerizes in native gels. Part of the ESX / type VII secretion system (T7SS), which is composed of cytosolic and membrane components. The ESX membrane complex is composed of EccB, EccC and EccD.

Its subcellular location is the cell membrane. EsxB binding to the third FtsK domain causes multimerization; a subsequent unknown step relieves the allosteric inhibition of linker 2 on FtsK domain 1, activating the ATPase activity. Functionally, part of the ESX specialized secretion system, which exports proteins from the cell including EsxA (ESAT-6) and EsxB (CFP-10). Might be the translocase subunit. Probably only the first FtsK domain can hydrolyze ATP. This chain is ESX secretion system protein EccC, found in Geobacillus thermodenitrificans (strain NG80-2).